The following is a 598-amino-acid chain: Beta-galactosidase (598 aa).

The N-terminal stretch at 1–21 (MLRTTLAPLVLALALALPAAA) is a signal peptide. Glu-184 serves as the catalytic Proton donor. The Nucleophile role is filled by Glu-260.

Belongs to the glycosyl hydrolase 35 family.

The catalysed reaction is Hydrolysis of terminal non-reducing beta-D-galactose residues in beta-D-galactosides.. In terms of biological role, preferentially hydrolyzes beta(1-&gt;3) galactosyl linkages over beta(1-&gt;4) linkages. The chain is Beta-galactosidase (bga) from Xanthomonas manihotis.